The sequence spans 113 residues: U11-theraphotoxin-Hhn1f (113 aa).

The first 21 residues, 1–21 (MNTVRVTFLLVFVLAVSLGQA), serve as a signal peptide directing secretion. Residues 22 to 74 (DKDENRMEMQEKTEQGKSYLDFAENLLLQKLEELEAKLLEEDSEESRNSRQKR) constitute a propeptide that is removed on maturation. A disordered region spans residues 61-83 (EEDSEESRNSRQKRCIGEGVPCD). Intrachain disulfides connect cysteine 75–cysteine 90, cysteine 82–cysteine 95, and cysteine 89–cysteine 110.

Belongs to the neurotoxin 14 (magi-1) family. 01 (HNTX-16) subfamily. In terms of tissue distribution, expressed by the venom gland.

Its subcellular location is the secreted. In terms of biological role, probable ion channel inhibitor. The chain is U11-theraphotoxin-Hhn1f from Cyriopagopus hainanus (Chinese bird spider).